The primary structure comprises 308 residues: Electron transfer flavoprotein subunit alpha (308 aa).

252–280 provides a ligand contact to FAD; sequence LYVAVGISGAIQHLAGMKDSKVIVAINKD.

It belongs to the ETF alpha-subunit/FixB family. In terms of assembly, heterodimer of an alpha and a beta subunit. FAD serves as cofactor.

The electron transfer flavoprotein serves as a specific electron acceptor for other dehydrogenases. It transfers the electrons to the main respiratory chain via ETF-ubiquinone oxidoreductase (ETF dehydrogenase). This chain is Electron transfer flavoprotein subunit alpha (etfA), found in Paracoccus denitrificans.